A 48-amino-acid polypeptide reads, in one-letter code: Cytochrome b559 subunit beta (48 aa).

A helical membrane pass occupies residues 23-39 (WLAVHALAIPSVFFLGA). Residue H27 coordinates heme.

This sequence belongs to the PsbE/PsbF family. As to quaternary structure, heterodimer of an alpha subunit and a beta subunit. PSII is composed of 1 copy each of membrane proteins PsbA, PsbB, PsbC, PsbD, PsbE, PsbF, PsbH, PsbI, PsbJ, PsbK, PsbL, PsbM, PsbT, PsbX, PsbY, Psb30/Ycf12, peripheral proteins PsbO, CyanoQ (PsbQ), PsbU, PsbV and a large number of cofactors. It forms dimeric complexes. The cofactor is heme b.

Its subcellular location is the cellular thylakoid membrane. Its function is as follows. This b-type cytochrome is tightly associated with the reaction center of photosystem II (PSII). PSII is a light-driven water:plastoquinone oxidoreductase that uses light energy to abstract electrons from H(2)O, generating O(2) and a proton gradient subsequently used for ATP formation. It consists of a core antenna complex that captures photons, and an electron transfer chain that converts photonic excitation into a charge separation. The chain is Cytochrome b559 subunit beta from Prochlorococcus marinus (strain MIT 9515).